Consider the following 543-residue polypeptide: Adenosine deaminase 2 (543 aa).

Residues 1–26 (MFLKFKNIFFIVLTLSIVFNGLIVNS) form the signal peptide. The span at 31–54 (INNKNNNNNNNNKDLSSSESGSSS) shows a compositional bias: low complexity. The interval 31–58 (INNKNNNNNNNNKDLSSSESGSSSDINP) is disordered. An N-linked (GlcNAc...) asparagine glycan is attached at asparagine 126. Positions 144 and 146 each coordinate Zn(2+). Asparagine 179 is a glycosylation site (N-linked (GlcNAc...) asparagine). Substrate is bound at residue 232–239 (WRKFDGIF). N-linked (GlcNAc...) asparagine glycans are attached at residues asparagine 309 and asparagine 326. Glycine 355 provides a ligand contact to substrate. Residue histidine 389 coordinates Zn(2+). Glutamate 392 (proton donor) is an active-site residue. N-linked (GlcNAc...) asparagine glycosylation is present at asparagine 397. Histidine 414 acts as the Proton acceptor in catalysis. Aspartate 471 is a Zn(2+) binding site. Aspartate 472 provides a ligand contact to substrate. N-linked (GlcNAc...) asparagine glycosylation is found at asparagine 508 and asparagine 514.

Belongs to the metallo-dependent hydrolases superfamily. Adenosine and AMP deaminases family. ADGF subfamily. Zn(2+) serves as cofactor.

Its subcellular location is the secreted. It carries out the reaction adenosine + H2O + H(+) = inosine + NH4(+). Its function is as follows. Adenosine deaminase that may contribute to the degradation of extracellular adenosine, a signaling molecule that controls a variety of cellular responses. May play a role in the regulation of cell proliferation. The chain is Adenosine deaminase 2 from Dictyostelium discoideum (Social amoeba).